The primary structure comprises 468 residues: 6-phospho-beta-galactosidase 2 (468 aa).

Positions 19, 116, 159, 160, and 297 each coordinate D-galactose 6-phosphate. Glutamate 160 (proton donor) is an active-site residue. Residue glutamate 375 is the Nucleophile of the active site. The D-galactose 6-phosphate site is built by serine 428, tryptophan 429, lysine 435, and tyrosine 437.

The protein belongs to the glycosyl hydrolase 1 family.

It catalyses the reaction a 6-phospho-beta-D-galactoside + H2O = D-galactose 6-phosphate + an alcohol. It participates in carbohydrate metabolism; lactose degradation; D-galactose 6-phosphate and beta-D-glucose from lactose 6-phosphate: step 1/1. The polypeptide is 6-phospho-beta-galactosidase 2 (Streptococcus pneumoniae (strain ATCC BAA-255 / R6)).